The chain runs to 237 residues: Ribonuclease PH (237 aa).

Phosphate is bound by residues R86 and 124 to 126 (GTR).

This sequence belongs to the RNase PH family. In terms of assembly, homohexameric ring arranged as a trimer of dimers.

It carries out the reaction tRNA(n+1) + phosphate = tRNA(n) + a ribonucleoside 5'-diphosphate. Phosphorolytic 3'-5' exoribonuclease that plays an important role in tRNA 3'-end maturation. Removes nucleotide residues following the 3'-CCA terminus of tRNAs; can also add nucleotides to the ends of RNA molecules by using nucleoside diphosphates as substrates, but this may not be physiologically important. Probably plays a role in initiation of 16S rRNA degradation (leading to ribosome degradation) during starvation. This is Ribonuclease PH from Shewanella sp. (strain ANA-3).